Reading from the N-terminus, the 417-residue chain is Peptidyl-Asp metalloendopeptidase (417 aa).

A signal peptide spans 1-23; it reads MKSKSMCTTVGLIAMCLAGSAAA. His-331 serves as a coordination point for Zn(2+). Residue Glu-332 is part of the active site. Zn(2+)-binding residues include His-335 and His-341.

This sequence belongs to the peptidase M72 family. It depends on Zn(2+) as a cofactor.

The catalysed reaction is Cleavage of Xaa-|-Asp, Xaa-|-Glu and Xaa-|-cysteic acid bonds.. Metalloprotease, specifically cleaves on the N-terminal side of aspartyl, glutamyl and cysteic acid residues. The protein is Peptidyl-Asp metalloendopeptidase of Xanthomonas campestris pv. campestris (strain ATCC 33913 / DSM 3586 / NCPPB 528 / LMG 568 / P 25).